The primary structure comprises 173 residues: Large ribosomal subunit protein bL9 (173 aa).

The interval 150-173 (KQEDKKSLSKKLNKADEQGERAEV) is disordered.

It belongs to the bacterial ribosomal protein bL9 family.

In terms of biological role, binds to the 23S rRNA. This is Large ribosomal subunit protein bL9 from Borreliella burgdorferi (strain ZS7) (Borrelia burgdorferi).